We begin with the raw amino-acid sequence, 513 residues long: uncharacterized protein (513 aa).

Residues 11 to 219 (HLEVERKFDV…SKLARVLGAT (209 aa)) enclose the CYTH domain. Residues 228 to 506 (PQPPADPVHR…LEAALRKLDK (279 aa)) form the CHAD domain.

This is an uncharacterized protein from Mycobacterium tuberculosis (strain CDC 1551 / Oshkosh).